The following is a 523-amino-acid chain: MAVCARLCGVGQSGGCRRRRQRKGAGNDPELEDEEEEDEVRIEAEVLVEGQAAVAPLRPRSLLQLPPEILVEIFSSLPGTELPSLAQVCRKFRQILTTDTIWKRRCKQEYGVCENLRKLEVTGVSCHDVYVKLLHQYRHILGLWQPDIGPYGGLLNVVVDGLFIIGWMYLPPHDPHVDEGMRLKPVFRIHLMERNNATVECMYGHKGPHNGQIQIVKKDEFSTKCLQTDYHRMSGGRQEEFRTWLREDLGRTLEDIFHEHMQELILMKFIYICQYDKCLTYRRIYHPPNRPDDLLNPGFFKGTYGSHGLEIVMFSFHGTIAKATKITGDPNVPAGQQTLEVDLTRPVQLPDVEHLRNFDEISRLILDVQSQIQREQRQTGNEEDDGKGAGPDRAEHSQQPAPVHRPAKEDVNGVDNADDREQKPPNVQSFVLPAGVMARNEEYPRSCKMCFYGTGLIAGHGFSSPERTPGLFILFDEDRFGFIWLELKSFSLYSRMRDRFQHSEAPSLEAFDEMLQHMQSWTT.

The F-box domain maps to 59–105; it reads PRSLLQLPPEILVEIFSSLPGTELPSLAQVCRKFRQILTTDTIWKRR. The Zn(2+) site is built by C201, H209, C225, and H231. The disordered stretch occupies residues 372-427; that stretch reads IQREQRQTGNEEDDGKGAGPDRAEHSQQPAPVHRPAKEDVNGVDNADDREQKPPNV. Basic and acidic residues-rich tracts occupy residues 386 to 396 and 406 to 423; these read GKGAGPDRAEH and PAKE…REQK.

It belongs to the FBXO31 family. As to quaternary structure, part of a SCF (SKP1-cullin-F-box) protein ligase complex SCF(FBXO31).

It localises to the cytoplasm. It participates in protein modification; protein ubiquitination. Substrate-recognition component of the SCF(FBXO31) protein ligase complex, which specifically mediates the ubiquitination of proteins amidated at their C-terminus in response to oxidative stress, leading to their degradation by the proteasome. Fbxo31 specifically recognizes and binds C-terminal peptides bearing an amide: C-terminal amidation in response to oxidative stress takes place following protein fragmentation. The SCF(FBXO31) also plays a role in G1 arrest following DNA damage by mediating ubiquitination of phosphorylated cyclin-D1 (ccnd1), promoting its degradation by the proteasome, resulting in G1 arrest. The SCF(FBXO31) complex is however not a major regulator of ccnd1 stability during the G1/S transition. In Xenopus laevis (African clawed frog), this protein is F-box only protein 31-B (fbxo31-b).